A 25-amino-acid chain; its full sequence is U1-poneritoxin-Ng1b (25 aa).

In terms of tissue distribution, expressed by the venom gland.

The protein localises to the secreted. It is found in the target cell membrane. Its function is as follows. Has a broad spectrum of activity against both Gram-positive and Gram-negative bacteria and S.cerevisiae. Has insecticidal and hemolytic activities. May act by disrupting the integrity of the bacterial cell membrane. The polypeptide is U1-poneritoxin-Ng1b (Neoponera goeldii (Ponerine ant)).